Consider the following 276-residue polypeptide: SKA complex subunit 1 homolog (276 aa).

Residues 48-78 adopt a coiled-coil conformation; it reads VDVSLTAMEAQLQAVRRRLQEEREAFPKAKK.

It belongs to the SKA1 family.

In Oryza sativa subsp. japonica (Rice), this protein is SKA complex subunit 1 homolog.